Reading from the N-terminus, the 384-residue chain is Urea transporter 1 (384 aa).

At Glu-39 the chain carries Phosphoserine. 5 helical membrane passes run 61 to 81 (ISQVVFVSNPISGILILVGLL), 85 to 105 (PWWALCGCVGTVVSTLTALLL), 111 to 131 (AIAAGLQGYNATLVGILMAVF), 138 to 158 (FWWLIFPVSAMSMTCPVFSSA), and 168 to 188 (LPVFTLPFNMALSMYLSATGH). N-linked (GlcNAc...) asparagine glycosylation is present at Asn-206. The next 4 helical transmembrane spans lie at 250-270 (LMCLHAAIGSLLGVIAGLSLA), 276-296 (IYFGLWGFNSSLACIAIGGMF), 305-325 (LLALACALFTAYFGACMAHLM), and 327-347 (VVHLPACTWSFCLATLLFLLL).

Belongs to the urea transporter family. In terms of assembly, homotrimer; each subunit contains a pore through which urea permeates. Identified in a complex with STOM. Post-translationally, N-glycosylated in red blood cells, as well as in most non-erythroid tissues, except in the gastrocnemius muscle and in the gastrointestinal tract, including liver, colon and stomach. As to expression, expressed in brain, kidney, heart, liver, lung, skeletal muscle, spleen, testis, ureter and urinary bladder (at protein level). Along the gastrointestinal tract, detected in colon, jejunum and stomach (at protein level). In the kidney, expressed in some microvessels of the inner and outer medulla, but not all (at protein level). Not detected in the cortex (at protein level). Detected in the urothelium all along the urinary tract, including the papilla surface, the ureter, the bladder and the urethra (at protein level). In the brain, expressed at the border of the corpus callosum and striatum in astrocytic cellular processes surrounding blood microvessels (at protein level). Detected in erythrocytes (at protein level).

Its subcellular location is the cell membrane. It is found in the basolateral cell membrane. It catalyses the reaction urea(in) = urea(out). Mediates the transport of urea driven by a concentration gradient across the cell membranes of erythrocytes and the renal inner medullary collecting duct which is critical to the urinary concentrating mechanism. Facilitates water transport in erythrocytes. This Mus musculus (Mouse) protein is Urea transporter 1 (Slc14a1).